The primary structure comprises 245 residues: MDLENFLLGIPIVTRYWFLASTIIPLLGRFGFINVQWMFLQWDLVVNKFQFWRPLTALIYYPVTPQTGFHWLMMCYFLYNYSKALESETYRGRSADYLFMLIFNWFFCSGLCMALDIYFLLEPMVISVLYVWCQVNKDTIVSFWFGMRFPARYLPWVLWGFNAVLRGGGTNELVGILVGHAYFFVALKYPDEYGVDLISTPEFLHRLIPDEDGGIHGQDGNIRGARQQPRGHQWPGGVGARLGGN.

At 1–5 (MDLEN) the chain is on the cytoplasmic side. The helical transmembrane segment at 6-26 (FLLGIPIVTRYWFLASTIIPL) threads the bilayer. At 27–57 (LGRFGFINVQWMFLQWDLVVNKFQFWRPLTA) the chain is on the lumenal side. A helical membrane pass occupies residues 58 to 78 (LIYYPVTPQTGFHWLMMCYFL). At 79 to 100 (YNYSKALESETYRGRSADYLFM) the chain is on the cytoplasmic side. Residues 101 to 121 (LIFNWFFCSGLCMALDIYFLL) traverse the membrane as a helical segment. Residues 122-166 (EPMVISVLYVWCQVNKDTIVSFWFGMRFPARYLPWVLWGFNAVLR) are Lumenal-facing. Residues 167–187 (GGGTNELVGILVGHAYFFVAL) traverse the membrane as a helical segment. The Cytoplasmic segment spans residues 188–245 (KYPDEYGVDLISTPEFLHRLIPDEDGGIHGQDGNIRGARQQPRGHQWPGGVGARLGGN). The tract at residues 218-245 (QDGNIRGARQQPRGHQWPGGVGARLGGN) is disordered. A compositionally biased stretch (gly residues) spans 234–245 (WPGGVGARLGGN).

This sequence belongs to the derlin family.

The protein resides in the endoplasmic reticulum membrane. Specifically required for the degradation process of misfolded endoplasmic reticulum (ER) luminal proteins. Participates in the transfer of misfolded proteins from the ER to the cytosol, where they are destroyed by the proteasome in a ubiquitin-dependent manner. This chain is Derlin-1, found in Caenorhabditis elegans.